Here is an 88-residue protein sequence, read N- to C-terminus: Guanine nucleotide-binding protein subunit gamma (88 aa).

Cys84 carries the S-palmitoyl cysteine lipid modification. The residue at position 85 (Cys85) is a Cysteine methyl ester. The S-farnesyl cysteine moiety is linked to residue Cys85. The propeptide at 86-88 (TIM) is removed in mature form.

It belongs to the G protein gamma family. G proteins are composed of 3 units, alpha, beta and gamma.

It is found in the membrane. The sequence is that of Guanine nucleotide-binding protein subunit gamma from Candida glabrata (strain ATCC 2001 / BCRC 20586 / JCM 3761 / NBRC 0622 / NRRL Y-65 / CBS 138) (Yeast).